The chain runs to 270 residues: Tryptophan synthase alpha chain (270 aa).

Catalysis depends on proton acceptor residues Glu51 and Asp62.

The protein belongs to the TrpA family. As to quaternary structure, tetramer of two alpha and two beta chains.

It catalyses the reaction (1S,2R)-1-C-(indol-3-yl)glycerol 3-phosphate + L-serine = D-glyceraldehyde 3-phosphate + L-tryptophan + H2O. It functions in the pathway amino-acid biosynthesis; L-tryptophan biosynthesis; L-tryptophan from chorismate: step 5/5. The alpha subunit is responsible for the aldol cleavage of indoleglycerol phosphate to indole and glyceraldehyde 3-phosphate. The protein is Tryptophan synthase alpha chain of Methanothermobacter thermautotrophicus (strain ATCC 29096 / DSM 1053 / JCM 10044 / NBRC 100330 / Delta H) (Methanobacterium thermoautotrophicum).